Here is a 445-residue protein sequence, read N- to C-terminus: Glycine--tRNA ligase (445 aa).

Residues Arg97 and Glu145 each contribute to the substrate site. Residues Arg177–Glu179, Phe187–Phe192, Glu262–Ile263, and Gly308–Arg311 contribute to the ATP site. A substrate-binding site is contributed by Phe192 to Glu196. Substrate is bound at residue Glu304 to Gly308.

It belongs to the class-II aminoacyl-tRNA synthetase family. As to quaternary structure, homodimer.

It localises to the cytoplasm. The catalysed reaction is tRNA(Gly) + glycine + ATP = glycyl-tRNA(Gly) + AMP + diphosphate. Functionally, catalyzes the attachment of glycine to tRNA(Gly). The sequence is that of Glycine--tRNA ligase from Borreliella afzelii (strain PKo) (Borrelia afzelii).